The sequence spans 421 residues: FBD-associated F-box protein At5g56370 (421 aa).

In terms of domain architecture, F-box spans 1-52; sequence MDSISLLPDDFLLRILSLLPTKDVLNTSVLSKRWRYLWKLVPKLQYSLIDKN. The 51-residue stretch at 332–382 folds into the FBD domain; it reads HWEEPSSVPETLMFVLETLEWRNYRGLKMENELASFLLKHSRRLKIATFSP.

The chain is FBD-associated F-box protein At5g56370 from Arabidopsis thaliana (Mouse-ear cress).